Reading from the N-terminus, the 394-residue chain is Chalcone synthase (394 aa).

Cys168 is an active-site residue.

The protein belongs to the thiolase-like superfamily. Chalcone/stilbene synthases family.

It catalyses the reaction (E)-4-coumaroyl-CoA + 3 malonyl-CoA + 3 H(+) = 2',4,4',6'-tetrahydroxychalcone + 3 CO2 + 4 CoA. It participates in secondary metabolite biosynthesis; flavonoid biosynthesis. The primary product of this enzyme is 4,2',4',6'-tetrahydroxychalcone (also termed naringenin-chalcone or chalcone) which can under specific conditions spontaneously isomerize into naringenin. The polypeptide is Chalcone synthase (CHS) (Raphanus sativus (Radish)).